The chain runs to 507 residues: MYRLRRKRAAPKDIYPSCKISNTCPPDIQNKIEHTTIADKILQYGSLGVFLGGLGIGTARGSGGRIGYTPLGEGGGVRVATRPTPVRPTIPVETVGPSEIFPIDVVDPTGPAVIPLQDLGRDFPIPTVQVIAEIHPISDIPNIVASSTNEGESAILDVLRGNATIRTVSRTQYNNPSFTVASTSNISAGEASTSDIVFVSNGSGDRVVGEDIPLVELNLGLETDTSSVVQETAFSSSTPIAERPSFRPSRFYNRRLYEQVQVQDPRFVEQPQSMVTFDNPAFEPELDEVSIIFQRDLDALAQTPVPEFRDVVYLSKPTFSREPGGRLRVSRLGKSSTIRTRLGTAIGARTHFFYDLSSIAPEDSIELLPLGEHSQTTVISSNLGDTAFIQGETAEDDLEVISLETPQLYSEEELLDTNESVGENLQLTITNSEGEVSILDLTQSRVRPPFGTEDTSLHVYYPNSSKGTPIINPEESFTPLVIIALNNSTGDFELHPSLRKRRKRAYV.

The Nuclear localization signal signature appears at 1 to 9; it reads MYRLRRKRA. An intrachain disulfide couples Cys18 to Cys24. The Nuclear localization signal signature appears at 500-506; that stretch reads KRRKRAY.

The protein belongs to the papillomaviridae L2 protein family. Interacts with major capsid protein L1. Interacts with E2; this interaction inhibits E2 transcriptional activity but not the DNA replication function E2. Interacts with host GADD45GIP1. Interacts with host HSPA8; this interaction is required for L2 nuclear translocation. Interacts with host importins KPNB2 and KPNB3. Forms a complex with importin alpha2-beta1 heterodimers via interaction with the importin alpha2 adapter. Interacts with host DYNLT1; this interaction is essential for virus intracellular transport during entry. Interacts (via C-terminus) with host retromer subunits VPS35 and VPS29. Post-translationally, highly phosphorylated.

It localises to the virion. Its subcellular location is the host nucleus. The protein localises to the host early endosome. It is found in the host Golgi apparatus. Its function is as follows. Minor protein of the capsid that localizes along the inner surface of the virion, within the central cavities beneath the L1 pentamers. Plays a role in capsid stabilization through interaction with the major capsid protein L1. Once the virion enters the host cell, L2 escorts the genomic DNA into the nucleus by promoting escape from the endosomal compartments and traffic through the host Golgi network. Mechanistically, the C-terminus of L2 possesses a cell-penetrating peptide that protudes from the host endosome, interacts with host cytoplasmic retromer cargo and thereby mediates the capsid delivery to the host trans-Golgi network. Plays a role through its interaction with host dynein in the intracellular microtubule-dependent transport of viral capsid toward the nucleus. Mediates the viral genome import into the nucleus through binding to host importins. Once within the nucleus, L2 localizes viral genomes to host PML bodies in order to activate early gene expression for establishment of infection. Later on, promotes late gene expression by interacting with the viral E2 protein and by inhibiting its transcriptional activation functions. During virion assembly, encapsidates the genome by direct interaction with the viral DNA. The polypeptide is Minor capsid protein L2 (Human papillomavirus type 1 (Human papillomavirus type 1a)).